The primary structure comprises 241 residues: Large ribosomal subunit protein uL3 (241 aa).

Disordered regions lie at residues 139-164 (VSHR…KMPG) and 215-241 (DAPK…QEGA). An N5-methylglutamine modification is found at glutamine 151.

It belongs to the universal ribosomal protein uL3 family. In terms of assembly, part of the 50S ribosomal subunit. Forms a cluster with proteins L14 and L19. In terms of processing, methylated by PrmB.

Its function is as follows. One of the primary rRNA binding proteins, it binds directly near the 3'-end of the 23S rRNA, where it nucleates assembly of the 50S subunit. This Rhodopseudomonas palustris (strain BisB5) protein is Large ribosomal subunit protein uL3.